The primary structure comprises 610 residues: Glutamine--fructose-6-phosphate aminotransferase [isomerizing] (610 aa).

The Nucleophile; for GATase activity role is filled by Cys-2. Residues 2-221 (CGIVGAVAQR…DGDVVDLQLA (220 aa)) form the Glutamine amidotransferase type-2 domain. SIS domains follow at residues 286–426 (AYKV…TRGR) and 459–600 (WADR…VDKP). The active-site For Fru-6P isomerization activity is the Lys-605.

Homodimer.

It is found in the cytoplasm. It catalyses the reaction D-fructose 6-phosphate + L-glutamine = D-glucosamine 6-phosphate + L-glutamate. Catalyzes the first step in hexosamine metabolism, converting fructose-6P into glucosamine-6P using glutamine as a nitrogen source. In Bordetella bronchiseptica (strain ATCC BAA-588 / NCTC 13252 / RB50) (Alcaligenes bronchisepticus), this protein is Glutamine--fructose-6-phosphate aminotransferase [isomerizing].